Reading from the N-terminus, the 326-residue chain is Adenosine receptor A1 (326 aa).

The Extracellular portion of the chain corresponds to 1–10 (MPHSVSAFQA). The helical transmembrane segment at 11 to 33 (AYIGIEVLIALVSVPGNVLVIWA) threads the bilayer. Residues 34 to 46 (VKVNQALRDATFC) lie on the Cytoplasmic side of the membrane. Residues 47 to 69 (FIASLAVADVAVGALVIPLAILI) traverse the membrane as a helical segment. Over 70–80 (NIGPQTYFHTC) the chain is Extracellular. A disulfide bond links Cys-80 and Cys-169. A helical membrane pass occupies residues 81-102 (LMVACPVLILTQSSILALLAIA). The Cytoplasmic segment spans residues 103-123 (VDRYLRVKIPLRYKTVVTPRR). A helical transmembrane segment spans residues 124–146 (AAVAIAGCWILSLVVGLTPMFGW). The Extracellular segment spans residues 147–176 (NNLSKIEMAWAANGSVGEPVIKCEFEKVIS). Asn-159 is a glycosylation site (N-linked (GlcNAc...) asparagine). The chain crosses the membrane as a helical span at residues 177 to 201 (MEYMVYFNFFVWVLPPLLLMVLIYL). At 202–235 (EVFYLIRKQLSKKVSASSGDPQKYYGKELKIAKS) the chain is on the cytoplasmic side. The helical transmembrane segment at 236 to 259 (LALILFLFALSWLPLHILNCITLF) threads the bilayer. The Extracellular segment spans residues 260 to 267 (CPTCHKPT). Residues 268–292 (ILTYIAIFLTHGNSAMNPIVYAFRI) traverse the membrane as a helical segment. Residues 293–326 (QKFRVTFLKIWNDHFRCQPEPPIDEDLPEEKVDD) are Cytoplasmic-facing. Cys-309 is lipidated: S-palmitoyl cysteine.

This sequence belongs to the G-protein coupled receptor 1 family.

The protein resides in the cell membrane. Its function is as follows. Receptor for adenosine. The activity of this receptor is mediated by G proteins which inhibit adenylyl cyclase. The sequence is that of Adenosine receptor A1 (ADORA1) from Cavia porcellus (Guinea pig).